Reading from the N-terminus, the 428-residue chain is Septin homolog spn7 (428 aa).

Residues K15 to N290 form the Septin-type G domain. The tract at residues G25–Q32 is G1 motif. GTP-binding positions include G25–Q32, G86, N166–E174, and G224. A G3 motif region spans residues E83–G86. The tract at residues G165–N168 is G4 motif. Disordered stretches follow at residues K287 to L345 and K387 to D414. The segment covering N290–V307 has biased composition (polar residues). Basic and acidic residues predominate over residues N309 to S325. Polar residues-rich tracts occupy residues S326–S339 and R392–T405.

The protein belongs to the TRAFAC class TrmE-Era-EngA-EngB-Septin-like GTPase superfamily. Septin GTPase family. As to quaternary structure, component of the sporulation-specific septin complex composed of at least spn2, spn5, spn6 and spn7.

It is found in the cytoplasm. Its subcellular location is the nucleus. It localises to the forespore membrane. Functionally, septin-like protein involved in the correct orientation of forespore membrane extension during sporulation. Binds phosphatidylinositol 4-phosphate. The protein is Septin homolog spn7 (spn7) of Schizosaccharomyces pombe (strain 972 / ATCC 24843) (Fission yeast).